The chain runs to 56 residues: uncharacterized protein (56 aa).

This is an uncharacterized protein from Thermoproteus tenax virus 1 (strain KRA1) (TTV1).